The chain runs to 368 residues: Dihydroorotate dehydrogenase (quinone) (368 aa).

FMN-binding positions include 67–71 (AGFDK) and Thr91. A substrate-binding site is contributed by Lys71. 116-120 (NRMGF) is a substrate binding site. 2 residues coordinate FMN: Asn146 and Asn179. Asn179 is a substrate binding site. Ser182 (nucleophile) is an active-site residue. Asn184 serves as a coordination point for substrate. Positions 222 and 250 each coordinate FMN. 251-252 (NT) contributes to the substrate binding site. FMN is bound by residues Gly276, Gly305, and 326-327 (YS).

This sequence belongs to the dihydroorotate dehydrogenase family. Type 2 subfamily. As to quaternary structure, monomer. Requires FMN as cofactor.

Its subcellular location is the cell membrane. The enzyme catalyses (S)-dihydroorotate + a quinone = orotate + a quinol. It functions in the pathway pyrimidine metabolism; UMP biosynthesis via de novo pathway; orotate from (S)-dihydroorotate (quinone route): step 1/1. Catalyzes the conversion of dihydroorotate to orotate with quinone as electron acceptor. The protein is Dihydroorotate dehydrogenase (quinone) of Streptomyces avermitilis (strain ATCC 31267 / DSM 46492 / JCM 5070 / NBRC 14893 / NCIMB 12804 / NRRL 8165 / MA-4680).